Reading from the N-terminus, the 60-residue chain is Large ribosomal subunit protein uL30 (60 aa).

It belongs to the universal ribosomal protein uL30 family. In terms of assembly, part of the 50S ribosomal subunit.

The protein is Large ribosomal subunit protein uL30 of Streptococcus suis (strain 98HAH33).